The following is a 218-amino-acid chain: GTP cyclohydrolase 1 (218 aa).

Zn(2+) contacts are provided by Cys-109, His-112, and Cys-180.

This sequence belongs to the GTP cyclohydrolase I family. Toroid-shaped homodecamer, composed of two pentamers of five dimers.

The catalysed reaction is GTP + H2O = 7,8-dihydroneopterin 3'-triphosphate + formate + H(+). It functions in the pathway cofactor biosynthesis; 7,8-dihydroneopterin triphosphate biosynthesis; 7,8-dihydroneopterin triphosphate from GTP: step 1/1. This chain is GTP cyclohydrolase 1, found in Histophilus somni (strain 129Pt) (Haemophilus somnus).